The sequence spans 185 residues: DNA-directed RNA polymerase 22 kDa subunit (185 aa).

Belongs to the poxviridae DNA-directed RNA polymerase 22 kDa subunit family. The DNA-dependent RNA polymerase used for intermediate and late genes expression consists of eight subunits Rpo30/OPG66, Rpo7/OPG90, Rpo22/OPG103, Rpo147/OPG105, Rpo18/OPG119, Rpo19/OPG131, Rpo132/OPG151 and Rpo35/OPG156. The same holoenzyme, with the addition of the transcription-specificity factor OPG109, is used for early gene expression.

The protein resides in the virion. The catalysed reaction is RNA(n) + a ribonucleoside 5'-triphosphate = RNA(n+1) + diphosphate. Its function is as follows. Part of the DNA-dependent RNA polymerase which catalyzes the transcription of viral DNA into RNA using the four ribonucleoside triphosphates as substrates. Responsible for the transcription of early, intermediate and late genes. DNA-dependent RNA polymerase associates with the early transcription factor (ETF), itself composed of OPG118 and OPG133, thereby allowing the early genes transcription. Late transcription, and probably also intermediate transcription, require newly synthesized RNA polymerase. The protein is DNA-directed RNA polymerase 22 kDa subunit (OPG103) of Cynomys gunnisoni (Gunnison's prairie dog).